The primary structure comprises 471 residues: 3-isopropylmalate dehydratase large subunit (471 aa).

[4Fe-4S] cluster is bound by residues C347, C407, and C410.

The protein belongs to the aconitase/IPM isomerase family. LeuC type 1 subfamily. In terms of assembly, heterodimer of LeuC and LeuD. Requires [4Fe-4S] cluster as cofactor.

It carries out the reaction (2R,3S)-3-isopropylmalate = (2S)-2-isopropylmalate. Its pathway is amino-acid biosynthesis; L-leucine biosynthesis; L-leucine from 3-methyl-2-oxobutanoate: step 2/4. Functionally, catalyzes the isomerization between 2-isopropylmalate and 3-isopropylmalate, via the formation of 2-isopropylmaleate. The chain is 3-isopropylmalate dehydratase large subunit from Acaryochloris marina (strain MBIC 11017).